Here is a 649-residue protein sequence, read N- to C-terminus: DNA topoisomerase 3 (649 aa).

The region spanning Met1–Ile134 is the Toprim domain. Positions 7, 103, and 105 each coordinate Mg(2+). The Topo IA-type catalytic domain occupies Phe155–Ile603. An interaction with DNA region spans residues Ser194–Gln199. Catalysis depends on Tyr328, which acts as the O-(5'-phospho-DNA)-tyrosine intermediate. The segment at Phe614–Glu649 is disordered.

Belongs to the type IA topoisomerase family. Requires Mg(2+) as cofactor.

It catalyses the reaction ATP-independent breakage of single-stranded DNA, followed by passage and rejoining.. In terms of biological role, releases the supercoiling and torsional tension of DNA, which is introduced during the DNA replication and transcription, by transiently cleaving and rejoining one strand of the DNA duplex. Introduces a single-strand break via transesterification at a target site in duplex DNA. The scissile phosphodiester is attacked by the catalytic tyrosine of the enzyme, resulting in the formation of a DNA-(5'-phosphotyrosyl)-enzyme intermediate and the expulsion of a 3'-OH DNA strand. The free DNA strand then undergoes passage around the unbroken strand, thus removing DNA supercoils. Finally, in the religation step, the DNA 3'-OH attacks the covalent intermediate to expel the active-site tyrosine and restore the DNA phosphodiester backbone. This chain is DNA topoisomerase 3, found in Salmonella typhimurium (strain LT2 / SGSC1412 / ATCC 700720).